The sequence spans 769 residues: MTGTPSAPTTSPDDQADGPGEGTVDRQPYRELGLTDDEYERIVATLGRVPTDAELAMYSVMWSEHCSYKSSKVHLRQFRDTPATDRLLVGMGENAGVVDVGEGLAVTFKVESHNHPSFVEPYQGAATGVGGIVRDILTMGARPIGILDPLRFGAADAPDTARVLPGVVAGIGGYGNCLGLPTIGGEVVFDPVYGGNPLVNALCVGVMPVGRVQTSAATGVGNAVVLLGAKTGRDGIGGVSVLASATFDEGGGPARRPSVQVGDPFTEKILIECCLELFDRGLVTGIQDLGGAGLTCALTETTAAGIATGQPGGMEVDLDLVPLREASMAAHEVLASESQERMLAIVTPDALPEVLALAERWGVIATNIGTVTDSGRLVVRWHGEVVVDVPPGSLADDGPVYERPLRRPADLDLLRADAPSALERPRTGDALRATLLRMIASPNLCSRAWVTEQYDRYVQANTVLAQPEDAGVLRLSASGLGIALATDGNGRYARLDPFAGAQLALAEACRNVTAAGAEPIAVTNCLNFGSPEDPEVMWQFAQACAGLADACRRLGLPVTGGNVSFYNQTGSAPIHPTPVVGVLGLFDDVTRRTPIGFTDEGDALLLLGDTRDEFGGSEWAWATHGHLGGTPPAVDLEREKLLGEILVGGSREGLLTAAHDLSEGGLAQALVESCLRGGHGARIELPAGADAFVELFSESAGRAVVAVPAAEQDRFARLCADRGLPCRQIGVVTDGEGGSLNVAGEFAIPLDELRAAHEGTLPRLFGRGA.

Residues 1 to 13 (MTGTPSAPTTSPD) are compositionally biased toward polar residues. The disordered stretch occupies residues 1-30 (MTGTPSAPTTSPDDQADGPGEGTVDRQPYR). Histidine 65 is a catalytic residue. Residues tyrosine 68 and lysine 109 each coordinate ATP. A Mg(2+)-binding site is contributed by glutamate 111. Substrate-binding positions include 112 to 115 (SHNH) and arginine 134. Histidine 113 (proton acceptor) is an active-site residue. Aspartate 135 contacts Mg(2+). Residue glutamine 260 coordinates substrate. Mg(2+) is bound at residue aspartate 288. 337–339 (ESQ) provides a ligand contact to substrate. Residues asparagine 524 and glycine 561 each coordinate ATP. Asparagine 562 contributes to the Mg(2+) binding site. Serine 564 lines the substrate pocket.

This sequence belongs to the FGAMS family. Monomer. Part of the FGAM synthase complex composed of 1 PurL, 1 PurQ and 2 PurS subunits.

The protein resides in the cytoplasm. It catalyses the reaction N(2)-formyl-N(1)-(5-phospho-beta-D-ribosyl)glycinamide + L-glutamine + ATP + H2O = 2-formamido-N(1)-(5-O-phospho-beta-D-ribosyl)acetamidine + L-glutamate + ADP + phosphate + H(+). Its pathway is purine metabolism; IMP biosynthesis via de novo pathway; 5-amino-1-(5-phospho-D-ribosyl)imidazole from N(2)-formyl-N(1)-(5-phospho-D-ribosyl)glycinamide: step 1/2. In terms of biological role, part of the phosphoribosylformylglycinamidine synthase complex involved in the purines biosynthetic pathway. Catalyzes the ATP-dependent conversion of formylglycinamide ribonucleotide (FGAR) and glutamine to yield formylglycinamidine ribonucleotide (FGAM) and glutamate. The FGAM synthase complex is composed of three subunits. PurQ produces an ammonia molecule by converting glutamine to glutamate. PurL transfers the ammonia molecule to FGAR to form FGAM in an ATP-dependent manner. PurS interacts with PurQ and PurL and is thought to assist in the transfer of the ammonia molecule from PurQ to PurL. This Parafrankia sp. (strain EAN1pec) protein is Phosphoribosylformylglycinamidine synthase subunit PurL.